Reading from the N-terminus, the 120-residue chain is Large ribosomal subunit protein bL20 (120 aa).

It belongs to the bacterial ribosomal protein bL20 family.

Its function is as follows. Binds directly to 23S ribosomal RNA and is necessary for the in vitro assembly process of the 50S ribosomal subunit. It is not involved in the protein synthesizing functions of that subunit. The sequence is that of Large ribosomal subunit protein bL20 from Pseudoalteromonas translucida (strain TAC 125).